Consider the following 362-residue polypeptide: Probable endopolygalacturonase B (362 aa).

Positions 1–20 are cleaved as a signal peptide; sequence MHFLQNAFVAATMGAAPAAA. A propeptide spanning residues 21–25 is cleaved from the precursor; that stretch reads TPLEK. An intrachain disulfide couples cysteine 28 to cysteine 43. PbH1 repeat units lie at residues 155-184, 185-206, 207-227, 236-257, 265-287, and 299-344; these read ADHL…DIGQ, STYI…AINS, GEHI…SIGS, VNDV…RIKT, VENV…VVEQ, and TNGV…DVTG. The Proton donor role is filled by aspartate 199. Cysteine 201 and cysteine 217 form a disulfide bridge. Histidine 221 is a catalytic residue. A disulfide bridge connects residues cysteine 327 and cysteine 332. A glycan (N-linked (GlcNAc...) asparagine) is linked at asparagine 334. A disulfide bridge connects residues cysteine 351 and cysteine 360.

It belongs to the glycosyl hydrolase 28 family.

The protein localises to the secreted. It carries out the reaction (1,4-alpha-D-galacturonosyl)n+m + H2O = (1,4-alpha-D-galacturonosyl)n + (1,4-alpha-D-galacturonosyl)m.. In terms of biological role, involved in maceration and soft-rotting of plant tissue. Hydrolyzes the 1,4-alpha glycosidic bonds of de-esterified pectate in the smooth region of the plant cell wall. This Aspergillus kawachii (White koji mold) protein is Probable endopolygalacturonase B (pgaB).